The sequence spans 180 residues: ATP synthase subunit b 2 (180 aa).

A helical transmembrane segment spans residues 33–53; the sequence is IFWLLVTLVAIYFLLTRVALP.

Belongs to the ATPase B chain family. As to quaternary structure, F-type ATPases have 2 components, F(1) - the catalytic core - and F(0) - the membrane proton channel. F(1) has five subunits: alpha(3), beta(3), gamma(1), delta(1), epsilon(1). F(0) has three main subunits: a(1), b(2) and c(10-14). The alpha and beta chains form an alternating ring which encloses part of the gamma chain. F(1) is attached to F(0) by a central stalk formed by the gamma and epsilon chains, while a peripheral stalk is formed by the delta and b chains.

The protein localises to the cell inner membrane. F(1)F(0) ATP synthase produces ATP from ADP in the presence of a proton or sodium gradient. F-type ATPases consist of two structural domains, F(1) containing the extramembraneous catalytic core and F(0) containing the membrane proton channel, linked together by a central stalk and a peripheral stalk. During catalysis, ATP synthesis in the catalytic domain of F(1) is coupled via a rotary mechanism of the central stalk subunits to proton translocation. Functionally, component of the F(0) channel, it forms part of the peripheral stalk, linking F(1) to F(0). The b'-subunit is a diverged and duplicated form of b found in plants and photosynthetic bacteria. This is ATP synthase subunit b 2 (atpF2) from Cereibacter sphaeroides (strain ATCC 17025 / ATH 2.4.3) (Rhodobacter sphaeroides).